Here is a 22-residue protein sequence, read N- to C-terminus: Myofibril-bound serine protease (22 aa).

This sequence belongs to the peptidase S1 family. As to expression, detected in muscle (at protein level).

It localises to the cytoplasm. With respect to regulation, inhibited by the serine protease inhibitors, antipain, aprotinin, DFP, leupeptin, STI and TLCK, and by the cysteine proteinase inhibitors DTNB and to a lesser extent E-64. Not inhibited by the metalloproteinase inhibitor EDTA. Functionally, serine protease that selectively cleaves Arg-|-Xaa bonds. This chain is Myofibril-bound serine protease, found in Cyprinus carpio (Common carp).